Reading from the N-terminus, the 429-residue chain is MDLVPSSTLWSIAQELALYLAFTVPTAFVIITTPKSSFLRLAWTPCLLYILYRFSLQVPSLTTSQFLNGVAAGQATVAALQCLNLLLITKLDERELVHAGLCIPSSSLLVRVACAWALLVNFRGIGTVWEVKNVPQHAAYLQKPKQHRLSRRRYVLRESAIIIWQYLLLDLIHMSTKDTPPGDLARLFGPGLEYRYLDATAEQWFGRVSVGIFSWLVPSRVCLNIVSRIYCLVLVVLRISAPESCRPSFGRVRDACTIRGFWGKFWHQSFRWPLTSVGSFVARDVLRLPRPSLLERYTNIFFTFFTSAVLHLACDAILGIPPSGSGAMPFFCVVPLAIMFEDGVQEVWRRVTGPSQGAVPFWQRLVGFLWVGSWMYATSPWYLYPAARQPPERTWMVPVSVVGEIGLRVAQKVLLVYGVVLYWAIGGEI.

Transmembrane regions (helical) follow at residues 12 to 32 (IAQELALYLAFTVPTAFVIIT), 39 to 56 (LRLAWTPCLLYILYRFSL), 69 to 89 (GVAAGQATVAALQCLNLLLIT), 154 to 174 (YVLRESAIIIWQYLLLDLIHM), 221 to 241 (VCLNIVSRIYCLVLVVLRISA), 300 to 320 (IFFTFFTSAVLHLACDAILGI), 324 to 344 (GSGAMPFFCVVPLAIMFEDGV), 365 to 385 (LVGFLWVGSWMYATSPWYLYP), and 409 to 429 (VAQKVLLVYGVVLYWAIGGEI).

It belongs to the wax synthase family.

It localises to the membrane. Its pathway is secondary metabolite biosynthesis; terpenoid biosynthesis. Its function is as follows. Acetyltransferase; part of the gene cluster that mediates the biosynthesis of pyripyropene A, a specific human acyl-coenzyme A:cholesterol acyltransferase 2 inhibitor. The first step of the pathway is the synthesis of nicotinyl-CoA from nicotinic acid by the nicotinic acid-CoA ligase pyr1. Nicotinyl-CoA is then a substrate of polyketide synthase pyr2 to produce 4-hydroxy-6-(3-pyridinyl)-2H-pyran-2-one (HPPO) which is further prenylated by the polyprenyl transferase pyr6 to yield farnesyl-HPPO. The next steps consist of an epoxidation of farnesyl-HPPO to epoxyfarnesyl-HPPO by FAD-dependent monooxygenase pyr5 and a cyclization of the terpenoid portion by the terpene cyclase pyr4 to yield deacetyl-pyripyropene E. The 2 cytochrome P450 monooxygenases pyr3 and pyr9, and the 2 acetyltransferases pyr7 and pyr8 are involved in the conversion of deacetyl-pyripyropene E into pyripyropene A through several cycles of oxidation and acetylation steps. Pyr7 acetylates deacetyl-pyripyropene E to pyripyropene E which is oxidized to 11-deacetyl-pyripyropene O by pyr3, which is in turn acetylated into pyripyropene O by pyr8. Pyripyropene O is then oxidized to deacetyl-pyripyropene A by pyr9. Deacetyl-pyripyropene A is finally acetylated to pyripyropene A by pyr8. This Aspergillus fumigatus (strain ATCC MYA-4609 / CBS 101355 / FGSC A1100 / Af293) (Neosartorya fumigata) protein is Acetyltransferase pyr8.